A 347-amino-acid polypeptide reads, in one-letter code: Secretory carrier-associated membrane protein 3 (347 aa).

Positions 1 to 88 (MAQSRDGGNP…EPKNYGSYST (88 aa)) are disordered. At 1-170 (MAQSRDGGNP…QKTVSTMYYL (170 aa)) the chain is on the cytoplasmic side. Ser-32 is modified (phosphoserine). A Phosphothreonine modification is found at Thr-37. A phosphotyrosine mark is found at Tyr-41 and Tyr-53. A compositionally biased stretch (pro residues) spans 49-66 (PPPAYEPPAPAPLPPPSA). Residues Ser-72 and Ser-76 each carry the phosphoserine modification. Tyr-83 carries the post-translational modification Phosphotyrosine. A Phosphoserine modification is found at Ser-85. A run of 4 helical transmembrane segments spans residues 171-191 (WMCSTLALLLNFLACLASFCV), 197-217 (AGFGLSILWVLLFTPCSFVCW), 247-267 (FVLQAIGIPGWGFSGWISALV), and 277-297 (VLMLLVALLFTGIAVLGIVML). The Cytoplasmic portion of the chain corresponds to 298–347 (KRIHSLYRRTGASFQKAQQEFAAGVFSNPAVRTAAANAAAGAAENAFRAP). A Glycyl lysine isopeptide (Lys-Gly) (interchain with G-Cter in SUMO1) cross-link involves residue Lys-313.

Belongs to the SCAMP family. Interacts with NEDD4, NEDD4L and TSG101. Interacts with RNF126. Post-translationally, monoubiquitinated. As to expression, widely expressed, with highest expression in heart and skeletal muscle.

It is found in the membrane. In terms of biological role, functions in post-Golgi recycling pathways. Acts as a recycling carrier to the cell surface. This Homo sapiens (Human) protein is Secretory carrier-associated membrane protein 3 (SCAMP3).